Consider the following 2602-residue polypeptide: Filamin-B (2602 aa).

Residues 1–239 form an actin-binding region; sequence MPVTEKDLAE…VMTYLSQFPK (239 aa). Calponin-homology (CH) domains follow at residues 16 to 122 and 139 to 242; these read KIQQ…LHYS and QTPK…KAKL. Threonine 216 carries the phosphothreonine modification. Residues 244–267 form a disordered region; that stretch reads PGAPLKPKLNPKKARAYGRGIEPT. Filamin repeat units lie at residues 249 to 347, 349 to 446, 447 to 543, 544 to 636, 640 to 736, 737 to 839, 840 to 938, 939 to 1034, 1035 to 1127, 1128 to 1222, 1223 to 1322, 1323 to 1415, 1416 to 1511, 1512 to 1608, and 1609 to 1704; these read KPKL…EVNV, KAQG…GVQI, GEAC…EVQV, GPEA…MAFI, TGDY…RVNI, GQGS…RVKV, DPSH…TVGV, AAPL…TVEA, SLPP…KADI, EMPF…WVKV, EPAI…KVAV, TEGC…RVPS, KDVV…KVKV, LPTY…RIRA, and TQTG…TVMA. Phosphothreonine is present on threonine 519. N6-acetyllysine is present on lysine 681. Serine 730 bears the Phosphoserine mark. Positions 837 to 850 are enriched in basic and acidic residues; the sequence is VKVDPSHDASKVKA. The interval 837 to 862 is disordered; it reads VKVDPSHDASKVKAEGPGLSKAGVEN. Phosphoserine is present on residues serine 886, serine 932, serine 983, and serine 1028. The residue at position 1307 (threonine 1307) is a Phosphothreonine. The residue at position 1316 (serine 1316) is a Phosphoserine. 3 positions are modified to phosphoserine: serine 1433, serine 1505, and serine 1602. The segment at 1705–1728 is hinge 1; sequence TDGEVTAMEEAPVNACPPGFRPWV. Filamin repeat units follow at residues 1729–1813, 1816–1908, 1919–1994, 1997–2089, 2091–2185, 2188–2280, 2282–2375, and 2379–2471; these read TEEA…SPLQ, VNYP…TAKI, KLGS…SIMV, SEIG…TVKI, GEGR…QFTV, LGEG…LVPV, APSD…KVRV, and GQAG…KAKV. N6-acetyllysine is present on lysine 1780. 2 positions are modified to phosphoserine: serine 2083 and serine 2113. Serine 2369 and serine 2465 each carry phosphoserine. A Glycyl lysine isopeptide (Lys-Gly) (interchain with G-Cter in ISG15) cross-link involves residue lysine 2468. The segment at 2472–2506 is hinge 2; that stretch reads TGQRLVSPGSANETSSILVESVTRSSTETCYSAIP. The interval 2472-2602 is self-association site, tail; sequence TGQRLVSPGS…PGSPFHVTVP (131 aa). Phosphoserine occurs at positions 2478, 2481, and 2492. The Filamin 24 repeat unit spans residues 2507-2601; sequence KSSSDASKVT…IPGSPFHVTV (95 aa). 2 positions are modified to N6-succinyllysine: lysine 2518 and lysine 2524. Lysine 2576 carries the post-translational modification N6-acetyllysine.

It belongs to the filamin family. In terms of assembly, homodimer. Interacts with FLNA, FLNC, INPPL1, ITGB1A, ITGB1D, ITGB3, ITGB6, MYOT, MYOZ1, PSEN1 and PSEN2. Interacts with MICALL2. Interacts with RFLNA and RFLNB. Interacts with ASB2 isoform 1; the interaction targets FLNB for proteasomal degradation. In terms of processing, ISGylation prevents ability to interact with the upstream activators of the JNK cascade and inhibits IFNA-induced JNK signaling. Ubiquitination by a SCF-like complex containing ASB2 isoform 1 leads to proteasomal degradation which promotes muscle differentiation. Expressed in hippocampus, cortex, cerebellar Purkinje cells and granule cell layers.

The protein resides in the cytoplasm. It is found in the cell cortex. Its subcellular location is the cytoskeleton. It localises to the stress fiber. The protein localises to the myofibril. The protein resides in the sarcomere. It is found in the z line. In terms of biological role, connects cell membrane constituents to the actin cytoskeleton. May promote orthogonal branching of actin filaments and links actin filaments to membrane glycoproteins. Anchors various transmembrane proteins to the actin cytoskeleton. The sequence is that of Filamin-B (Flnb) from Mus musculus (Mouse).